A 687-amino-acid polypeptide reads, in one-letter code: Glycine--tRNA ligase beta subunit (687 aa).

It belongs to the class-II aminoacyl-tRNA synthetase family. In terms of assembly, tetramer of two alpha and two beta subunits.

It localises to the cytoplasm. It carries out the reaction tRNA(Gly) + glycine + ATP = glycyl-tRNA(Gly) + AMP + diphosphate. In Geotalea daltonii (strain DSM 22248 / JCM 15807 / FRC-32) (Geobacter daltonii), this protein is Glycine--tRNA ligase beta subunit.